A 380-amino-acid polypeptide reads, in one-letter code: Beta sliding clamp (380 aa).

The protein belongs to the beta sliding clamp family. In terms of assembly, forms a ring-shaped head-to-tail homodimer around DNA which binds and tethers DNA polymerases and other proteins to the DNA. The DNA replisome complex has a single clamp-loading complex (3 tau and 1 each of delta, delta', psi and chi subunits) which binds 3 Pol III cores (1 core on the leading strand and 2 on the lagging strand) each with a beta sliding clamp dimer. Additional proteins in the replisome are other copies of gamma, psi and chi, Ssb, DNA helicase and RNA primase.

The protein localises to the cytoplasm. Confers DNA tethering and processivity to DNA polymerases and other proteins. Acts as a clamp, forming a ring around DNA (a reaction catalyzed by the clamp-loading complex) which diffuses in an ATP-independent manner freely and bidirectionally along dsDNA. Initially characterized for its ability to contact the catalytic subunit of DNA polymerase III (Pol III), a complex, multichain enzyme responsible for most of the replicative synthesis in bacteria; Pol III exhibits 3'-5' exonuclease proofreading activity. The beta chain is required for initiation of replication as well as for processivity of DNA replication. The polypeptide is Beta sliding clamp (dnaN) (Halalkalibacterium halodurans (strain ATCC BAA-125 / DSM 18197 / FERM 7344 / JCM 9153 / C-125) (Bacillus halodurans)).